The chain runs to 362 residues: Guanine nucleotide-binding protein alpha-10 subunit (362 aa).

Gly-2 is lipidated: N-myristoyl glycine. A lipid anchor (S-palmitoyl cysteine) is attached at Cys-4. The G-alpha domain occupies 35–362 (LEQSVLLIGP…QENLKDTGMI (328 aa)). The interval 38-51 (SVLLIGPGESGKST) is G1 motif. GTP contacts are provided by residues 43 to 50 (GPGESGKS), 184 to 190 (VRIRVPT), 209 to 213 (DCGGQ), 278 to 281 (NKID), and Ala-335. Mg(2+) contacts are provided by Ser-50 and Thr-190. The segment at 182–190 (DIVRIRVPT) is G2 motif. Positions 205-214 (LSVIDCGGQR) are G3 motif. The interval 274-281 (ILFLNKID) is G4 motif. Residues 333–337 (TCAIS) form a G5 motif region.

Belongs to the G-alpha family. In terms of assembly, g proteins are composed of 3 units; alpha, beta and gamma. The alpha chain contains the guanine nucleotide binding site.

Functionally, guanine nucleotide-binding proteins (G proteins) are involved as modulators or transducers in various transmembrane signaling systems. The chain is Guanine nucleotide-binding protein alpha-10 subunit (gpa-10) from Caenorhabditis briggsae.